The sequence spans 61 residues: Small ribosomal subunit protein uS14 (61 aa).

Zn(2+) is bound by residues C24, C27, C40, and C43.

This sequence belongs to the universal ribosomal protein uS14 family. Zinc-binding uS14 subfamily. As to quaternary structure, part of the 30S ribosomal subunit. Contacts proteins S3 and S10. It depends on Zn(2+) as a cofactor.

Binds 16S rRNA, required for the assembly of 30S particles and may also be responsible for determining the conformation of the 16S rRNA at the A site. This Geobacter metallireducens (strain ATCC 53774 / DSM 7210 / GS-15) protein is Small ribosomal subunit protein uS14.